The chain runs to 157 residues: Phosphopantetheine adenylyltransferase (157 aa).

Thr10 contacts substrate. ATP is bound by residues 10–11 (TF) and His18. Substrate contacts are provided by Lys42, Leu74, and Arg88. ATP is bound by residues 89-91 (GLR), Glu99, and 124-130 (NAFISSS).

The protein belongs to the bacterial CoaD family. In terms of assembly, homohexamer. Mg(2+) is required as a cofactor.

It is found in the cytoplasm. It carries out the reaction (R)-4'-phosphopantetheine + ATP + H(+) = 3'-dephospho-CoA + diphosphate. It functions in the pathway cofactor biosynthesis; coenzyme A biosynthesis; CoA from (R)-pantothenate: step 4/5. Its function is as follows. Reversibly transfers an adenylyl group from ATP to 4'-phosphopantetheine, yielding dephospho-CoA (dPCoA) and pyrophosphate. The protein is Phosphopantetheine adenylyltransferase of Helicobacter pylori (strain J99 / ATCC 700824) (Campylobacter pylori J99).